The primary structure comprises 27 residues: Toxin Bcg III 21.00 (27 aa).

The protein resides in the secreted. It localises to the nematocyst. Possible voltage-gated potassium channel (Kv) blocker. This chain is Toxin Bcg III 21.00, found in Bunodosoma cangicum (Sea anemone).